A 751-amino-acid chain; its full sequence is Amyloid-beta precursor protein (751 aa).

A signal peptide spans 1–17 (MLPGLALLLLAAWTARA). The Extracellular segment spans residues 18–682 (LEVPTDGNAG…AEDVGSNKGA (665 aa)). The GFLD subdomain stretch occupies residues 28–123 (LLAEPQIAMF…PYRCLVGEFV (96 aa)). The region spanning 28–189 (LLAEPQIAMF…RGVEFVCCPL (162 aa)) is the E1 domain. 6 disulfides stabilise this stretch: Cys-38–Cys-62, Cys-73–Cys-117, Cys-98–Cys-105, Cys-133–Cys-187, Cys-144–Cys-174, and Cys-158–Cys-186. Residue 96–110 (NWCKRDRKQCKTHPH) coordinates heparin. Positions 131 to 189 (DKCKFLHQERMDVCETHLHWHTVAKETCSEKSTNLHDYGMLLPCGIDKFRGVEFVCCPL) are cuBD subdomain. Residues His-147, His-151, and Tyr-168 each coordinate Cu(2+). The zinc-binding stretch occupies residues 181 to 188 (GVEFVCCP). Zn(2+)-binding residues include Glu-183, Cys-186, and Cys-187. Residues 195–284 (HVDSADAEED…TTTTTTESVE (90 aa)) are disordered. 2 positions are modified to phosphoserine; by CK1 and CK2: Ser-198 and Ser-206. 2 positions are modified to sulfotyrosine: Tyr-217 and Tyr-262. Residues 228-264 (VAEEEEVAEVEEEEADDDEDDEDGDEVEEEAEEPYEE) are compositionally biased toward acidic residues. Low complexity predominate over residues 268-281 (RTTSIATTTTTTTE). 3 disulfide bridges follow: Cys-291-Cys-341, Cys-300-Cys-324, and Cys-316-Cys-337. The region spanning 291–341 (CSEQAETGPCRAMISRWYFDVTEGKCAPFFYGGCGGNRNNFDTEEYCMAVC) is the BPTI/Kunitz inhibitor domain. 2 heparin-binding regions span residues 316–344 (CAPF…CGSV) and 363–428 (PGDE…QEAA). Residue Tyr-336 is modified to Sulfotyrosine. Positions 344 to 346 (VIP) match the OX-2 motif. The E2 domain occupies 355–546 (AVDKYLETPG…EEIQDEVDEL (192 aa)). Ser-422 bears the Phosphoserine mark. At Tyr-478 the chain carries Phosphotyrosine. A collagen-binding region spans residues 504–521 (AAQIRSQVMTHLRVIYER). N-linked (GlcNAc...) asparagine glycans are attached at residues Asn-523 and Asn-552. Cu(2+) contacts are provided by His-658, Tyr-662, His-665, and His-666. Residues His-658, Tyr-662, His-665, and His-666 each coordinate Zn(2+). The interval 676–703 (VGSNKGAIIGLMVGGVVIATVIVITLVM) is interaction with PSEN1. Residues 683–703 (IIGLMVGGVVIATVIVITLVM) traverse the membrane as a helical segment. Topologically, residues 704 to 751 (LKKKQYTSIHHGVVEVDAAVTPEERHLSKMQQNGYENPTYKFFEQMQN) are cytoplasmic. The Basolateral sorting signal signature appears at 705–715 (KKKQYTSIHHG). Thr-710 is modified (phosphothreonine). Ser-711 carries the post-translational modification Phosphoserine; by APP-kinase I. Positions 713-732 (HHGVVEVDAAVTPEERHLSK) are interaction with G(o)-alpha. Thr-724 is subject to Phosphothreonine; by CDK5 and MAPK10. The tract at residues 737 to 751 (GYENPTYKFFEQMQN) is required for the interaction with KIF5B and for anterograde transport in axons. Tyr-738 is subject to Phosphotyrosine; by ABL1. Residues 738–743 (YENPTY) carry the YENPXY motif; contains endocytosis signal motif. Lys-744 is covalently cross-linked (Glycyl lysine isopeptide (Lys-Gly) (interchain with G-Cter in ubiquitin)).

The protein belongs to the APP family. As to quaternary structure, binds, via its C-terminus, to the PID domain of several cytoplasmic proteins, including APBB family members, the APBA family, MAPK8IP1, SHC1 and NUMB and DAB1. Binding to DAB1 inhibits its serine phosphorylation. Interacts (via NPXY motif) with DAB2 (via PID domain); the interaction is impaired by tyrosine phosphorylation of the NPXY motif. Also interacts with GPCR-like protein BPP, APPBP1, IB1, KNS2 (via its TPR domains), APPBP2 (via BaSS) and DDB1. In vitro, it binds MAPT via the MT-binding domains. Associates with microtubules in the presence of ATP and in a kinesin-dependent manner. Interacts, through a C-terminal domain, with GNAO1. Amyloid-beta protein 42 binds CHRNA7 in hippocampal neurons. Amyloid-beta associates with HADH2. Interacts with CPEB1, ANKS1B and AGER. Interacts with ITM2B. Interacts with ITM2C. Interacts with IDE. Can form homodimers; dimerization is enhanced in the presence of Cu(2+) ions. Can form homodimers; this is promoted by heparin binding. Amyloid-beta protein 40 interacts with S100A9. CTF-alpha product of APP interacts with GSAP. Isoform APP695 interacts with SORL1 (via N-terminal ectodomain); this interaction retains APP in the trans-Golgi network and reduces processing into soluble APP-alpha and amyloid-beta peptides. Isoform APP770 interacts with SORL1. The C99 fragment also interacts with SORL1. Interacts with PLD3. Interacts with VDAC1. Interacts with NSG1; could regulate APP processing. Amyloid-beta protein 42 interacts with FPR2. Interacts (via transmembrane region) with PSEN1; the interaction is direct. Interacts with LRRK2. Interacts (via cytoplasmic domain) with KIF5B. Interacts (via C-terminus) with APBB2/FE65L1 (via C-terminus). Interacts (via intracellular domain) with APBB3. Post-translationally, proteolytically processed under normal cellular conditions. Cleavage either by alpha-secretase, beta-secretase or theta-secretase leads to generation and extracellular release of soluble APP peptides, S-APP-alpha and S-APP-beta, and the retention of corresponding membrane-anchored C-terminal fragments, C80, C83 and C99. Subsequent processing of C80 and C83 by gamma-secretase yields P3 peptides. This is the major secretory pathway and is non-amyloidogenic. Alternatively, presenilin/nicastrin-mediated gamma-secretase processing of C99 releases the amyloid-beta proteins, amyloid-beta protein 40 and amyloid-beta protein 42, major components of amyloid plaques, and the cytotoxic C-terminal fragments, gamma-CTF(50), gamma-CTF(57) and gamma-CTF(59). PSEN1 cleavage is more efficient with C83 than with C99 as substrate (in vitro). Amyloid-beta protein 40 and Amyloid-beta protein 42 are cleaved by ACE. Many other minor amyloid-beta peptides, amyloid-beta 1-X peptides, are found in cerebral spinal fluid (CSF) including the amyloid-beta X-15 peptides, produced from the cleavage by alpha-secretase. Proteolytically cleaved by caspases during neuronal apoptosis. Cleavage at Asp-720 by either caspase-3, -8 or -9 results in the production of the neurotoxic C31 peptide and the increased production of amyloid-beta peptides. In terms of processing, N- and O-glycosylated. Post-translationally, phosphorylation in the C-terminal on tyrosine, threonine and serine residues is neuron-specific. Phosphorylation can affect APP processing, neuronal differentiation and interaction with other proteins. Phosphorylated on Thr-724 in neuronal cells by Cdc5 kinase and Mapk10, in dividing cells by Cdc2 kinase in a cell-cycle dependent manner with maximal levels at the G2/M phase and, in vitro, by GSK-3-beta. The Thr-724 phosphorylated form causes a conformational change which reduces binding of Fe65 family members. In dopaminergic (DA) neurons, phosphorylation on Thr-724 by LRKK2 promotes the production and the nuclear translocation of the APP intracellular domain (AICD) which induces DA neuron apoptosis. Phosphorylation on Tyr-738 is required for SHC binding. Phosphorylated in the extracellular domain by casein kinases on both soluble and membrane-bound APP. This phosphorylation is inhibited by heparin. Trophic-factor deprivation triggers the cleavage of surface APP by beta-secretase to release sAPP-beta which is further cleaved to release an N-terminal fragment of APP (N-APP). In terms of processing, amyloid-beta peptides are degraded by IDE. Post-translationally, sulfated on tyrosine residues.

The protein resides in the cell membrane. It is found in the membrane. The protein localises to the perikaryon. It localises to the cell projection. Its subcellular location is the growth cone. The protein resides in the clathrin-coated pit. It is found in the early endosome. The protein localises to the cytoplasmic vesicle. It localises to the endoplasmic reticulum. Its subcellular location is the golgi apparatus. The protein resides in the secreted. It is found in the cell surface. The protein localises to the nucleus. It localises to the cytoplasm. Its function is as follows. Functions as a cell surface receptor and performs physiological functions on the surface of neurons relevant to neurite growth, neuronal adhesion and axonogenesis. Interaction between APP molecules on neighboring cells promotes synaptogenesis. Involved in cell mobility and transcription regulation through protein-protein interactions. Can promote transcription activation through binding to APBB1-KAT5 and inhibit Notch signaling through interaction with Numb. Couples to apoptosis-inducing pathways such as those mediated by G(o) and JIP. Inhibits G(o)-alpha ATPase activity. Acts as a kinesin I membrane receptor, mediating the axonal transport of beta-secretase and presenilin 1. By acting as a kinesin I membrane receptor, plays a role in axonal anterograde transport of cargo towards synapses in axons. May be involved in copper homeostasis/oxidative stress through copper ion reduction. In vitro, copper-metallated APP induces neuronal death directly or is potentiated through Cu(2+)-mediated low-density lipoprotein oxidation. Can regulate neurite outgrowth through binding to components of the extracellular matrix such as heparin and collagen I and IV. Induces a AGER-dependent pathway that involves activation of p38 MAPK, resulting in internalization of amyloid-beta peptide and mitochondrial dysfunction in cultured cortical neurons. Provides Cu(2+) ions for GPC1 which are required for release of nitric oxide (NO) and subsequent degradation of the heparan sulfate chains on GPC1. In terms of biological role, amyloid-beta peptides are lipophilic metal chelators with metal-reducing activity. Binds transient metals such as copper, zinc and iron. Functionally, the gamma-CTF peptides as well as the caspase-cleaved peptides, including C31, are potent enhancers of neuronal apoptosis. The sequence is that of Amyloid-beta precursor protein from Saimiri sciureus (Common squirrel monkey).